A 165-amino-acid chain; its full sequence is Phosphopantetheine adenylyltransferase (165 aa).

Threonine 10 serves as a coordination point for substrate. Residues 10–11 (TF) and histidine 18 each bind ATP. Positions 42, 75, and 89 each coordinate substrate. ATP-binding positions include 90–92 (GVR), glutamate 100, and 125–131 (VSFISSS).

The protein belongs to the bacterial CoaD family. As to quaternary structure, homohexamer. Mg(2+) is required as a cofactor.

The protein localises to the cytoplasm. The enzyme catalyses (R)-4'-phosphopantetheine + ATP + H(+) = 3'-dephospho-CoA + diphosphate. The protein operates within cofactor biosynthesis; coenzyme A biosynthesis; CoA from (R)-pantothenate: step 4/5. Reversibly transfers an adenylyl group from ATP to 4'-phosphopantetheine, yielding dephospho-CoA (dPCoA) and pyrophosphate. The chain is Phosphopantetheine adenylyltransferase from Buchnera aphidicola subsp. Acyrthosiphon pisum (strain 5A).